Consider the following 132-residue polypeptide: Large ribosomal subunit protein uL14 (132 aa).

Belongs to the universal ribosomal protein uL14 family. As to quaternary structure, part of the 50S ribosomal subunit. Forms a cluster with proteins L3 and L24e, part of which may contact the 16S rRNA in 2 intersubunit bridges.

Its function is as follows. Binds to 23S rRNA. Forms part of two intersubunit bridges in the 70S ribosome. This chain is Large ribosomal subunit protein uL14, found in Thermoplasma volcanium (strain ATCC 51530 / DSM 4299 / JCM 9571 / NBRC 15438 / GSS1).